Here is a 1355-residue protein sequence, read N- to C-terminus: Phospholipid-transporting ATPase DRS2 (1355 aa).

The segment covering 1-15 (MNDDRETPPKRKPGE) has biased composition (basic and acidic residues). Residues 1–50 (MNDDRETPPKRKPGEDDTLFDIDFLDDTTSHSGSRSKVTNSHANANYIPP) are disordered. An involved in autoinhibition region spans residues 1–104 (MNDDRETPPK…SDAYQPQSLR (104 aa)). Residues 1–221 (MNDDRETPPK…TFLPKFLFQE (221 aa)) lie on the Cytoplasmic side of the membrane. Positions 16-26 (DDTLFDIDFLD) are enriched in acidic residues. Residues 30-44 (SHSGSRSKVTNSHAN) are compositionally biased toward polar residues. Ser-102 carries the phosphoserine modification. The helical transmembrane segment at 222 to 242 (FSKYANLFFLCTSAIQQVPHV) threads the bilayer. Residues 237–238 (QQ) form an involved in phosphatidylserine substrate recognition region. Over 243 to 246 (SPTN) the chain is Lumenal. Residues 247–267 (RYTTIGTLLVVLIVSAMKECI) traverse the membrane as a helical segment. Topologically, residues 268–449 (EDIKRANSDK…VEKIINRQII (182 aa)) are cytoplasmic. A helical membrane pass occupies residues 450-470 (ALFTVLIVLILISSIGNVIMS). The Lumenal segment spans residues 471 to 490 (TADAKHLSYLYLEGTNKAGL). A helical membrane pass occupies residues 491 to 511 (FFKDFLTFWILFSNLVPISLF). The Cytoplasmic portion of the chain corresponds to 512–1012 (VTVELIKYYQ…WSYQRISVAI (501 aa)). The 4-aspartylphosphate intermediate role is filled by Asp-560. Residues Asp-560, Lys-561, Thr-562, Glu-655, Phe-698, Ser-700, Lys-703, Lys-721, Arg-755, Thr-756, Thr-835, Gly-836, Asp-837, Arg-928, and Lys-934 each coordinate ATP. Asp-560 provides a ligand contact to Mg(2+). Residue Thr-562 participates in Mg(2+) binding. Residue Asp-954 participates in Mg(2+) binding. Residues Asn-957 and Asp-958 each coordinate ATP. Asp-958 provides a ligand contact to Mg(2+). A helical transmembrane segment spans residues 1013-1033 (LYSFYKNTALYMTQFWYVFAN). The Lumenal segment spans residues 1034-1043 (AFSGQSIMES). A helical membrane pass occupies residues 1044–1064 (WTMSFYNLFFTVWPPFVIGVF). Over 1065–1094 (DQFVSSRLLERYPQLYKLGQKGQFFSVYIF) the chain is Cytoplasmic. A helical membrane pass occupies residues 1095-1115 (WGWIINGFFHSAIVFIGTILI). Residues 1116 to 1131 (YRYGFALNMHGELADH) lie on the Lumenal side of the membrane. Residues 1132–1152 (WSWGVTVYTTSVIIVLGKAAL) form a helical membrane-spanning segment. Lys-1149 contributes to the a 1,2-diacyl-sn-glycero-3-phospho-(1D-myo-inositol 4-phosphate) binding site. Topologically, residues 1153–1161 (VTNQWTKFT) are cytoplasmic. A helical membrane pass occupies residues 1162–1182 (LIAIPGSLLFWLIFFPIYASI). The Lumenal portion of the chain corresponds to 1183-1202 (FPHANISREYYGVVKHTYGS). The chain crosses the membrane as a helical span at residues 1203–1223 (GVFWLTLIVLPIFALVRDFLW). A 1,2-diacyl-sn-glycero-3-phospho-(1D-myo-inositol 4-phosphate) is bound by residues Arg-1219, Trp-1223, Lys-1224, Tyr-1235, and His-1236. Residues 1224 to 1355 (KYYKRMYEPE…SSRDDISFDI (132 aa)) lie on the Cytoplasmic side of the membrane. Residues 1230 to 1282 (YEPETYHVIQEMQKYNISDSRPHVQQFQNAIRKVRQVQRMKKQRGFAFSQAEE) form an interaction with GEA2 region. Residues 1231 to 1309 (EPETYHVIQE…KYGELQDASA (79 aa)) are involved in autoinhibition. Positions 1305-1355 (QDASANPFNDNNGLGSNDFESAEPFIENPFADGNQNSNRFSSSRDDISFDI) are disordered. Residues 1307 to 1323 (ASANPFNDNNGLGSNDF) show a composition bias toward polar residues. The segment covering 1346-1355 (SSRDDISFDI) has biased composition (basic and acidic residues).

The protein belongs to the cation transport ATPase (P-type) (TC 3.A.3) family. Type IV subfamily. As to quaternary structure, component of a flippase complex consisting of DRS2 and CDC50. Interacts with CDC50; the interaction is direct, is required for their mutual export from the endoplasmic reticulum, and preferentially occurs when DRS2 is in the E2P state. Interacts (via C-terminus) with GEA2 (via SEC7 domain); the interaction is direct. Interacts with GEA1. The cofactor is Mg(2+).

Its subcellular location is the golgi apparatus. It is found in the trans-Golgi network membrane. The protein resides in the endosome membrane. The enzyme catalyses ATP + H2O + phospholipidSide 1 = ADP + phosphate + phospholipidSide 2.. It carries out the reaction a 1,2-diacyl-sn-glycero-3-phospho-L-serine(out) + ATP + H2O = a 1,2-diacyl-sn-glycero-3-phospho-L-serine(in) + ADP + phosphate + H(+). It catalyses the reaction a 1,2-diacyl-sn-glycero-3-phosphoethanolamine(out) + ATP + H2O = a 1,2-diacyl-sn-glycero-3-phosphoethanolamine(in) + ADP + phosphate + H(+). Allosterically activated by binding 1,2-diacyl-sn-glycero-3-phospho-(1D-myo-inositol 4-phosphate) (phosphatidylinositol 4-phosphate). Inhibited by orthovanadate, N-ethylmaleimide, trifluoroberyllate and tetrafluoroaluminate; orthovanadate and N-ethylmaleimide inhibit phosphorylation of the active site aspartic acid. The ATPase activity is not potently stimulated by phosphatidylinositol 3-phosphate and phosphatidylinositol 5-phosphate, phosphatidylinositol 4,5-bisphosphate or phosphatidylcholine. Not inhibited by azide. Functionally, catalytic component of a P4-ATPase flippase complex which catalyzes the hydrolysis of ATP coupled to the transport of phosphatidylserine and small amounts of ethanolamine from the lumen to the cytosolic leaflet of the trans-Golgi network and ensures the maintenance of asymmetric distribution of phospholipids. Contributes to clathrin-coated vesicle formation, endocytosis, and protein trafficking between the Golgi and endosomal system. Does not appear to transport phosphatidylcholine or sphingomyelin. This is Phospholipid-transporting ATPase DRS2 from Saccharomyces cerevisiae (strain ATCC 204508 / S288c) (Baker's yeast).